The sequence spans 719 residues: DNA ligase (719 aa).

Residues 42–46 (DAEYD), 91–92 (SL), and Glu125 contribute to the NAD(+) site. The active-site N6-AMP-lysine intermediate is the Lys127. Arg148, Glu184, Lys300, and Lys324 together coordinate NAD(+). Zn(2+) contacts are provided by Cys429, Cys432, Cys447, and Cys453. A BRCT domain is found at 638 to 719 (TASSPIAGKT…WLQLIEGSYI (82 aa)).

It belongs to the NAD-dependent DNA ligase family. LigA subfamily. The cofactor is Mg(2+). It depends on Mn(2+) as a cofactor.

It catalyses the reaction NAD(+) + (deoxyribonucleotide)n-3'-hydroxyl + 5'-phospho-(deoxyribonucleotide)m = (deoxyribonucleotide)n+m + AMP + beta-nicotinamide D-nucleotide.. Its function is as follows. DNA ligase that catalyzes the formation of phosphodiester linkages between 5'-phosphoryl and 3'-hydroxyl groups in double-stranded DNA using NAD as a coenzyme and as the energy source for the reaction. It is essential for DNA replication and repair of damaged DNA. The protein is DNA ligase of Bartonella quintana (strain Toulouse) (Rochalimaea quintana).